Consider the following 161-residue polypeptide: Phosphopantetheine adenylyltransferase (161 aa).

Serine 8 provides a ligand contact to substrate. ATP-binding positions include 8–9 (SF) and histidine 16. Substrate is bound by residues 36 to 40 (ENPRK), leucine 72, and arginine 86. Residues 87–89 (GLR), glutamate 97, and 122–128 (FSFISSS) contribute to the ATP site. Glutamate 132 provides a ligand contact to substrate.

This sequence belongs to the bacterial CoaD family. In terms of assembly, homohexamer. Mg(2+) serves as cofactor.

Its subcellular location is the cytoplasm. It carries out the reaction (R)-4'-phosphopantetheine + ATP + H(+) = 3'-dephospho-CoA + diphosphate. Its pathway is cofactor biosynthesis; coenzyme A biosynthesis; CoA from (R)-pantothenate: step 4/5. In terms of biological role, reversibly transfers an adenylyl group from ATP to 4'-phosphopantetheine, yielding dephospho-CoA (dPCoA) and pyrophosphate. The polypeptide is Phosphopantetheine adenylyltransferase (Thermotoga maritima (strain ATCC 43589 / DSM 3109 / JCM 10099 / NBRC 100826 / MSB8)).